We begin with the raw amino-acid sequence, 156 residues long: FAD synthase (156 aa).

ATP contacts are provided by residues 16-17 (TF), 21-24 (HPGH), Asp-101, and Tyr-129.

Belongs to the archaeal FAD synthase family. In terms of assembly, homodimer. A divalent metal cation serves as cofactor.

The enzyme catalyses FMN + ATP + H(+) = FAD + diphosphate. It functions in the pathway cofactor biosynthesis; FAD biosynthesis; FAD from FMN: step 1/1. In terms of biological role, catalyzes the transfer of the AMP portion of ATP to flavin mononucleotide (FMN) to produce flavin adenine dinucleotide (FAD) coenzyme. The sequence is that of FAD synthase from Methanococcus aeolicus (strain ATCC BAA-1280 / DSM 17508 / OCM 812 / Nankai-3).